Here is a 107-residue protein sequence, read N- to C-terminus: Nucleoid-associated protein RF_1365 (107 aa).

The protein belongs to the YbaB/EbfC family. In terms of assembly, homodimer.

Its subcellular location is the cytoplasm. The protein resides in the nucleoid. Its function is as follows. Binds to DNA and alters its conformation. May be involved in regulation of gene expression, nucleoid organization and DNA protection. This chain is Nucleoid-associated protein RF_1365, found in Rickettsia felis (strain ATCC VR-1525 / URRWXCal2) (Rickettsia azadi).